Consider the following 38-residue polypeptide: Photosystem II reaction center protein X 1 (38 aa).

A helical membrane pass occupies residues 8-28 (FLWSLLYGAVVLGLLFGAIVF).

It belongs to the PsbX family. Type 1 subfamily. In terms of assembly, PSII is composed of 1 copy each of membrane proteins PsbA, PsbB, PsbC, PsbD, PsbE, PsbF, PsbH, PsbI, PsbJ, PsbK, PsbL, PsbM, PsbT, PsbX, PsbY, PsbZ, Psb30/Ycf12, peripheral proteins PsbO, CyanoQ (PsbQ), PsbU, PsbV and a large number of cofactors. It forms dimeric complexes.

The protein resides in the cellular thylakoid membrane. Functionally, involved in the binding and/or turnover of quinones at the Q(B) site of photosystem II (PSII). PSII is a light-driven water plastoquinone oxidoreductase, using light energy to abstract electrons from H(2)O, generating a proton gradient subsequently used for ATP formation. The chain is Photosystem II reaction center protein X 1 from Synechococcus sp. (strain JA-3-3Ab) (Cyanobacteria bacterium Yellowstone A-Prime).